The sequence spans 1133 residues: DNA-directed RNA polymerase III subunit RPC2 (1133 aa).

Lys186 is an RNA binding site. A DNA-binding site is contributed by Arg195. Arg213 contributes to the RNA binding site. Asp432 serves as a coordination point for DNA. Residues Gln438 and Gln692 each coordinate RNA. Asp753 contributes to the Mg(2+) binding site. RNA is bound by residues Lys896, Lys904, and Lys1019. DNA is bound by residues Arg1039, Ser1040, and Arg1046. Zn(2+)-binding residues include Cys1080, Cys1083, Cys1092, and Cys1095. Residues 1080 to 1095 (CGQCGLLGYSGWCHYC) form a C4-type zinc finger.

The protein belongs to the RNA polymerase beta chain family. In terms of assembly, component of the RNA polymerase III (Pol III) complex consisting of 17 subunits: a ten-subunit catalytic core composed of POLR3A/RPC1, POLR3B/RPC2, POLR1C/RPAC1, POLR1D/RPAC2, POLR3K/RPC10, POLR2E/RPABC1, POLR2F/RPABC2, POLR2H/RPABC3, POLR2K/RPABC4 and POLR2L/RPABC5; a mobile stalk composed of two subunits POLR3H/RPC8 and CRCP/RPC9, protruding from the core and functioning primarily in transcription initiation; and additional subunits homologous to general transcription factors of the RNA polymerase II machinery, POLR3C/RPC3-POLR3F/RPC6-POLR3G/RPC7 heterotrimer required for transcription initiation and POLR3D/RPC4-POLR3E/RPC5 heterodimer involved in both transcription initiation and termination. The cofactor is Mg(2+).

The protein localises to the nucleus. It is found in the cytoplasm. The protein resides in the cytosol. It carries out the reaction RNA(n) + a ribonucleoside 5'-triphosphate = RNA(n+1) + diphosphate. Its function is as follows. Catalytic core component of RNA polymerase III (Pol III), a DNA-dependent RNA polymerase which synthesizes small non-coding RNAs using the four ribonucleoside triphosphates as substrates. Synthesizes 5S rRNA, snRNAs, tRNAs and miRNAs from at least 500 distinct genomic loci. Pol III-mediated transcription cycle proceeds through transcription initiation, transcription elongation and transcription termination stages. During transcription initiation, Pol III is recruited to DNA promoters type I, II or III with the help of general transcription factors and other specific initiation factors. Once the polymerase has escaped from the promoter it enters the elongation phase during which RNA is actively polymerized, based on complementarity with the template DNA strand. Transcription termination involves the release of the RNA transcript and polymerase from the DNA. Forms Pol III active center together with the largest subunit POLR3A/RPC1. A single-stranded DNA template strand of the promoter is positioned within the central active site cleft of Pol III. Appends one nucleotide at a time to the 3' end of the nascent RNA, with POLR3A/RPC1 contributing a Mg(2+)-coordinating DxDGD motif, and POLR3B/RPC2 participating in the coordination of a second Mg(2+) ion and providing lysine residues believed to facilitate Watson-Crick base pairing between the incoming nucleotide and template base. Typically, Mg(2+) ions direct a 5' nucleoside triphosphate to form a phosphodiester bond with the 3' hydroxyl of the preceding nucleotide of the nascent RNA, with the elimination of pyrophosphate. Pol III plays a key role in sensing and limiting infection by intracellular bacteria and DNA viruses. Acts as a nuclear and cytosolic DNA sensor involved in innate immune response. Can sense non-self dsDNA that serves as template for transcription into dsRNA. The non-self RNA polymerase III transcripts, such as Epstein-Barr virus-encoded RNAs (EBERs) induce type I interferon and NF-kappa-B through the RIG-I pathway. The polypeptide is DNA-directed RNA polymerase III subunit RPC2 (Homo sapiens (Human)).